The sequence spans 333 residues: Electron transfer flavoprotein subunit alpha, mitochondrial (333 aa).

The transit peptide at methionine 1–phenylalanine 19 directs the protein to the mitochondrion. The domain I stretch occupies residues glutamine 20 to leucine 204. Position 59 is an N6-acetyllysine; alternate (lysine 59). Lysine 59 is modified (N6-succinyllysine; alternate). At lysine 62 the chain carries N6-acetyllysine. Lysine 69 is modified (N6-acetyllysine; alternate). Lysine 69 carries the post-translational modification N6-succinyllysine; alternate. An N6-acetyllysine modification is found at lysine 75. Residue threonine 93 is modified to Phosphothreonine. 2 positions are modified to N6-acetyllysine: lysine 101 and lysine 139. Serine 140 is modified (phosphoserine). N6-acetyllysine; alternate is present on lysine 158. The residue at position 158 (lysine 158) is an N6-succinyllysine; alternate. N6-acetyllysine is present on lysine 164. Lysine 187 carries the post-translational modification N6-succinyllysine. N6-acetyllysine; alternate is present on lysine 203. The residue at position 203 (lysine 203) is an N6-succinyllysine; alternate. The domain II stretch occupies residues threonine 205–lysine 333. Lysine 216 carries the post-translational modification N6-succinyllysine. Arginine 223 lines the FAD pocket. Residues lysine 226 and lysine 232 each carry the N6-acetyllysine; alternate modification. Residues lysine 226 and lysine 232 each carry the N6-succinyllysine; alternate modification. FAD is bound by residues serine 248, valine 263–threonine 266, serine 281–histidine 286, and asparagine 300. Lysine 301 bears the N6-succinyllysine mark. Aspartate 318–leucine 319 contacts FAD.

It belongs to the ETF alpha-subunit/FixB family. Heterodimer composed of ETFA and ETFB. Identified in a complex that contains ETFA, ETFB and ETFRF1. Interaction with ETFRF1 promotes dissociation of the bound FAD and loss of electron transfer activity. Interacts with TASOR. It depends on FAD as a cofactor.

It localises to the mitochondrion matrix. Its function is as follows. Heterodimeric electron transfer flavoprotein that accepts electrons from several mitochondrial dehydrogenases, including acyl-CoA dehydrogenases, glutaryl-CoA and sarcosine dehydrogenase. It transfers the electrons to the main mitochondrial respiratory chain via ETF-ubiquinone oxidoreductase (ETF dehydrogenase). Required for normal mitochondrial fatty acid oxidation and normal amino acid metabolism. The polypeptide is Electron transfer flavoprotein subunit alpha, mitochondrial (ETFA) (Macaca fascicularis (Crab-eating macaque)).